Here is a 405-residue protein sequence, read N- to C-terminus: Tryptophan synthase beta chain (405 aa).

Lys95 bears the N6-(pyridoxal phosphate)lysine mark.

It belongs to the TrpB family. As to quaternary structure, tetramer of two alpha and two beta chains. Pyridoxal 5'-phosphate serves as cofactor.

The catalysed reaction is (1S,2R)-1-C-(indol-3-yl)glycerol 3-phosphate + L-serine = D-glyceraldehyde 3-phosphate + L-tryptophan + H2O. It participates in amino-acid biosynthesis; L-tryptophan biosynthesis; L-tryptophan from chorismate: step 5/5. The beta subunit is responsible for the synthesis of L-tryptophan from indole and L-serine. The sequence is that of Tryptophan synthase beta chain from Pseudomonas entomophila (strain L48).